Reading from the N-terminus, the 172-residue chain is Water stress-inducible protein Rab21 (172 aa).

The tract at residues 1-172 is disordered; sequence MEHQGQHGHV…KIKEKLPGQH (172 aa). The stretch at 3–28 is one Type A repeat; sequence HQGQHGHVTSRVDEYGNPVGTGAGHG. Residues 21 to 65 are compositionally biased toward gly residues; it reads VGTGAGHGQMGTAGMGTHGTTGGMGTHGTTGGMGTHGTTGTGGGQ. The stretch at 98–115 is one Type B repeat; the sequence is RRKKGIKEKIKEKLPGGN. Residues 124-139 show a composition bias toward gly residues; sequence GGTGGAYGQQGHGTGM. The stretch at 125–149 is one Type A repeat; that stretch reads GTGGAYGQQGHGTGMTTGTTGAHGT. The span at 140-153 shows a compositional bias: low complexity; the sequence is TTGTTGAHGTTTTD. The span at 154-172 shows a compositional bias: basic and acidic residues; it reads TGEKKGIMDKIKEKLPGQH. The stretch at 156 to 172 is one Type B repeat; sequence EKKGIMDKIKEKLPGQH.

This sequence belongs to the plant dehydrin family.

The protein resides in the cytoplasm. This chain is Water stress-inducible protein Rab21 (RAB21), found in Oryza sativa subsp. indica (Rice).